The following is a 740-amino-acid chain: Leucine-rich repeat neuronal protein 4 (740 aa).

Positions 1 to 18 (MRQTLPLLLLTVLRPSWA) are cleaved as a signal peptide. Residues 19–679 (DPPQEKVPLF…PCAAFTTKPS (661 aa)) are Extracellular-facing. A glycan (N-linked (GlcNAc...) asparagine) is linked at asparagine 42. LRR repeat units lie at residues 51 to 74 (LPAADATALTLANRNLERLPGCLP), 75 to 97 (RTLRSLDASHNLLRALSTSELGH), 98 to 123 (LEQLQVLTLRHNRIAALRWGPGGPAG), 125 to 144 (HTLDLSYNQLAALPPCTGPA), 145 to 168 (LSSLRALALAGNPLRALQPRAFAC), 174 to 197 (LLNLSCTALGRGAQGGIAEAAFAG), 203 to 226 (LVTLEVLDLSGTFLERVESGWIRD), 228 to 251 (PKLTSLYLRKMPRLTTLEGDIFKM), 253 to 276 (PNLQQLDCQDSPALASVATHIFQD), and 277 to 300 (TPHLQVLLFQNCNLSSFPPWTLDS). A glycan (N-linked (GlcNAc...) asparagine) is linked at asparagine 176. N-linked (GlcNAc...) asparagine glycans are attached at residues asparagine 289, asparagine 379, and asparagine 442. The interval 389-517 (VAPSAAPATR…QAPNPSLSEG (129 aa)) is disordered. 2 stretches are compositionally biased toward polar residues: residues 430–454 (APSTTNSVAGHSNSSVFPRAASTTR) and 490–514 (WDRSISSPQPGQRTHATPQAPNPSL). In terms of domain architecture, Fibronectin type-III spans 579–679 (IPDPPRLQGV…PCAAFTTKPS (101 aa)). N-linked (GlcNAc...) asparagine glycosylation occurs at asparagine 622. Residues 680–700 (FALLLSGLCAASGLLLASTVV) form a helical membrane-spanning segment. At 701–740 (LSACLCRRGQTLGLQRCDTHLVAYKNPAFDDYPLGLQTVS) the chain is on the cytoplasmic side.

Its subcellular location is the membrane. In terms of biological role, may play an important role in hippocampus-dependent long-lasting memory. This is Leucine-rich repeat neuronal protein 4 (LRRN4) from Homo sapiens (Human).